Here is a 510-residue protein sequence, read N- to C-terminus: Bifunctional purine biosynthesis protein PurH (510 aa).

The MGS-like domain maps to methionine 1–valine 143.

It belongs to the PurH family.

It catalyses the reaction (6R)-10-formyltetrahydrofolate + 5-amino-1-(5-phospho-beta-D-ribosyl)imidazole-4-carboxamide = 5-formamido-1-(5-phospho-D-ribosyl)imidazole-4-carboxamide + (6S)-5,6,7,8-tetrahydrofolate. The catalysed reaction is IMP + H2O = 5-formamido-1-(5-phospho-D-ribosyl)imidazole-4-carboxamide. The protein operates within purine metabolism; IMP biosynthesis via de novo pathway; 5-formamido-1-(5-phospho-D-ribosyl)imidazole-4-carboxamide from 5-amino-1-(5-phospho-D-ribosyl)imidazole-4-carboxamide (10-formyl THF route): step 1/1. It participates in purine metabolism; IMP biosynthesis via de novo pathway; IMP from 5-formamido-1-(5-phospho-D-ribosyl)imidazole-4-carboxamide: step 1/1. This Deinococcus deserti (strain DSM 17065 / CIP 109153 / LMG 22923 / VCD115) protein is Bifunctional purine biosynthesis protein PurH.